The following is a 295-amino-acid chain: Bifunctional protein FolD 1 (295 aa).

Residues 165-167 (GKS), I190, and I231 each bind NADP(+).

Belongs to the tetrahydrofolate dehydrogenase/cyclohydrolase family. As to quaternary structure, homodimer.

The enzyme catalyses (6R)-5,10-methylene-5,6,7,8-tetrahydrofolate + NADP(+) = (6R)-5,10-methenyltetrahydrofolate + NADPH. It catalyses the reaction (6R)-5,10-methenyltetrahydrofolate + H2O = (6R)-10-formyltetrahydrofolate + H(+). It functions in the pathway one-carbon metabolism; tetrahydrofolate interconversion. Its function is as follows. Catalyzes the oxidation of 5,10-methylenetetrahydrofolate to 5,10-methenyltetrahydrofolate and then the hydrolysis of 5,10-methenyltetrahydrofolate to 10-formyltetrahydrofolate. This Rhizorhabdus wittichii (strain DSM 6014 / CCUG 31198 / JCM 15750 / NBRC 105917 / EY 4224 / RW1) (Sphingomonas wittichii) protein is Bifunctional protein FolD 1.